The primary structure comprises 130 residues: Cytochrome c oxidase subunit 13, mitochondrial (130 aa).

The transit peptide at 1-31 directs the protein to the mitochondrion; the sequence is MSMMNRNIGFLSRTLKTSVPKRAGLLSFRAY. The Mitochondrial matrix portion of the chain corresponds to 32–61; sequence SNEAKVNWLEEVQAEEEHAKRSSEFWKKVT. Residues 62–80 traverse the membrane as a helical segment; it reads YYIGGPALILASANAYYIY. Over 81–130 the chain is Mitochondrial intermembrane; the sequence is CKHQEHAKHVEDTDPGYSFENLRFKKYPWGDGSKTLFWNDKVNHLKKDDE.

It belongs to the cytochrome c oxidase subunit 6A family. As to quaternary structure, component of the cytochrome c oxidase (complex IV, CIV), a multisubunit enzyme composed of a catalytic core of 3 subunits and several supernumerary subunits. The complex exists as a monomer or a dimer and forms supercomplexes (SCs) in the inner mitochondrial membrane with ubiquinol-cytochrome c oxidoreductase (cytochrome b-c1 complex, complex III, CIII).

It is found in the mitochondrion inner membrane. The protein operates within energy metabolism; oxidative phosphorylation. Its function is as follows. Component of the cytochrome c oxidase, the last enzyme in the mitochondrial electron transport chain which drives oxidative phosphorylation. The respiratory chain contains 3 multisubunit complexes succinate dehydrogenase (complex II, CII), ubiquinol-cytochrome c oxidoreductase (cytochrome b-c1 complex, complex III, CIII) and cytochrome c oxidase (complex IV, CIV), that cooperate to transfer electrons derived from NADH and succinate to molecular oxygen, creating an electrochemical gradient over the inner membrane that drives transmembrane transport and the ATP synthase. Cytochrome c oxidase is the component of the respiratory chain that catalyzes the reduction of oxygen to water. Electrons originating from reduced cytochrome c in the intermembrane space (IMS) are transferred via the dinuclear copper A center (CU(A)) of subunit 2 and heme A of subunit 1 to the active site in subunit 1, a binuclear center (BNC) formed by heme A3 and copper B (CU(B)). The BNC reduces molecular oxygen to 2 water molecules unsing 4 electrons from cytochrome c in the IMS and 4 protons from the mitochondrial matrix. The polypeptide is Cytochrome c oxidase subunit 13, mitochondrial (cox13) (Schizosaccharomyces pombe (strain 972 / ATCC 24843) (Fission yeast)).